We begin with the raw amino-acid sequence, 134 residues long: Lymphocyte antigen 6F (134 aa).

The N-terminal stretch at 1–26 is a signal peptide; the sequence is MDSCHTTKSCVLILLVVLLCAERAQG. A UPAR/Ly6 domain is found at 27 to 119; that stretch reads LECYNCLGVS…TGGSTWTMTR (93 aa). Intrachain disulfides connect Cys29–Cys53, Cys32–Cys41, Cys46–Cys74, Cys78–Cys98, and Cys99–Cys104. Gly112 is lipidated: GPI-anchor amidated glycine. Residues 113-134 constitute a propeptide, removed in mature form; it reads STWTMTRVLLLNLGSVFLQTLL.

It localises to the cell membrane. This is Lymphocyte antigen 6F (Ly6f) from Mus musculus (Mouse).